The following is a 1196-amino-acid chain: DNA-directed RNA polymerase subunit beta (1196 aa).

Over residues 1152–1165 the composition is skewed to acidic residues; the sequence is EEEIEMRDLEDEED. The interval 1152–1196 is disordered; sequence EEEIEMRDLEDEEDAKQADGLALSGDEAPEETASPDVERDAVTKE. A compositionally biased stretch (basic and acidic residues) spans 1187–1196; that stretch reads DVERDAVTKE.

The protein belongs to the RNA polymerase beta chain family. The RNAP catalytic core consists of 2 alpha, 1 beta, 1 beta' and 1 omega subunit. When a sigma factor is associated with the core the holoenzyme is formed, which can initiate transcription.

The catalysed reaction is RNA(n) + a ribonucleoside 5'-triphosphate = RNA(n+1) + diphosphate. Functionally, DNA-dependent RNA polymerase catalyzes the transcription of DNA into RNA using the four ribonucleoside triphosphates as substrates. The polypeptide is DNA-directed RNA polymerase subunit beta (Bacillus velezensis (strain DSM 23117 / BGSC 10A6 / LMG 26770 / FZB42) (Bacillus amyloliquefaciens subsp. plantarum)).